We begin with the raw amino-acid sequence, 543 residues long: Cytochrome P450 1B1 (543 aa).

Cysteine 470 is a heme binding site.

This sequence belongs to the cytochrome P450 family. It depends on heme as a cofactor. As to expression, constitutively expressed in retinal and kidney pericytes cells. Expressed in retinal endothelial cells (at protein level). Expressed in cardiac, pulmonary and aortic endothelial cells. Constitutively expressed in trabecular meshwork of the eye (at protein level).

It localises to the endoplasmic reticulum membrane. Its subcellular location is the microsome membrane. The protein resides in the mitochondrion. It catalyses the reaction an organic molecule + reduced [NADPH--hemoprotein reductase] + O2 = an alcohol + oxidized [NADPH--hemoprotein reductase] + H2O + H(+). It carries out the reaction 17beta-estradiol + reduced [NADPH--hemoprotein reductase] + O2 = 2-hydroxy-17beta-estradiol + oxidized [NADPH--hemoprotein reductase] + H2O + H(+). The enzyme catalyses 17beta-estradiol + reduced [NADPH--hemoprotein reductase] + O2 = 4-hydroxy-17beta-estradiol + oxidized [NADPH--hemoprotein reductase] + H2O + H(+). The catalysed reaction is estrone + reduced [NADPH--hemoprotein reductase] + O2 = 2-hydroxyestrone + oxidized [NADPH--hemoprotein reductase] + H2O + H(+). It catalyses the reaction estrone + reduced [NADPH--hemoprotein reductase] + O2 = 4-hydroxyestrone + oxidized [NADPH--hemoprotein reductase] + H2O + H(+). It carries out the reaction testosterone + reduced [NADPH--hemoprotein reductase] + O2 = 6beta,17beta-dihydroxyandrost-4-en-3-one + oxidized [NADPH--hemoprotein reductase] + H2O + H(+). The enzyme catalyses progesterone + reduced [NADPH--hemoprotein reductase] + O2 = 6beta-hydroxyprogesterone + oxidized [NADPH--hemoprotein reductase] + H2O + H(+). The catalysed reaction is progesterone + reduced [NADPH--hemoprotein reductase] + O2 = 16alpha-hydroxyprogesterone + oxidized [NADPH--hemoprotein reductase] + H2O + H(+). It catalyses the reaction all-trans-retinol + reduced [NADPH--hemoprotein reductase] + O2 = all-trans-retinal + oxidized [NADPH--hemoprotein reductase] + 2 H2O + H(+). It carries out the reaction all-trans-retinal + reduced [NADPH--hemoprotein reductase] + O2 = all-trans-retinoate + oxidized [NADPH--hemoprotein reductase] + H2O + 2 H(+). The enzyme catalyses (5Z,8Z,11Z,14Z)-eicosatetraenoate + reduced [NADPH--hemoprotein reductase] + O2 = (8R,9S)-epoxy-(5Z,11Z,14Z)-eicosatrienoate + oxidized [NADPH--hemoprotein reductase] + H2O + H(+). The catalysed reaction is (5Z,8Z,11Z,14Z)-eicosatetraenoate + reduced [NADPH--hemoprotein reductase] + O2 = (11R,12S)-epoxy-(5Z,8Z,14Z)-eicosatrienoate + oxidized [NADPH--hemoprotein reductase] + H2O + H(+). It catalyses the reaction (5Z,8Z,11Z,14Z)-eicosatetraenoate + reduced [NADPH--hemoprotein reductase] + O2 = (11S,12R)-epoxy-(5Z,8Z,14Z)-eicosatrienoate + oxidized [NADPH--hemoprotein reductase] + H2O + H(+). It carries out the reaction (5Z,8Z,11Z,14Z)-eicosatetraenoate + reduced [NADPH--hemoprotein reductase] + O2 = (14R,15S)-epoxy-(5Z,8Z,11Z)-eicosatrienoate + oxidized [NADPH--hemoprotein reductase] + H2O + H(+). The enzyme catalyses (5S)-hydroperoxy-(6E,8Z,11Z,14Z)-eicosatetraenoate = 5-oxo-(6E,8Z,11Z,14Z)-eicosatetraenoate + H2O. The catalysed reaction is (12S)-hydroperoxy-(5Z,8Z,10E,14Z)-eicosatetraenoate = 12-oxo-(5Z,8Z,10E,14Z)-eicosatetraenoate + H2O. It catalyses the reaction (13S)-hydroperoxy-(9Z,11E)-octadecadienoate = 13-oxo-(9Z,11E)-octadecadienoate + H2O. It carries out the reaction (15S)-hydroperoxy-(5Z,8Z,11Z,13E)-eicosatetraenoate = 15-oxo-(5Z,8Z,11Z,13E)-eicosatetraenoate + H2O. The protein operates within steroid hormone biosynthesis. It functions in the pathway cofactor metabolism; retinol metabolism. Its pathway is lipid metabolism; arachidonate metabolism. Enzyme activity is increased by cytochrome b5. Enzyme activity is increased by liposomes containing anionic phospholipids, phosphatidic acid and cardiolipin. Inhibited by naringenin with an IC(50) of 5 uM. Functionally, a cytochrome P450 monooxygenase involved in the metabolism of various endogenous substrates, including fatty acids, steroid hormones and vitamins. Mechanistically, uses molecular oxygen inserting one oxygen atom into a substrate, and reducing the second into a water molecule, with two electrons provided by NADPH via cytochrome P450 reductase (NADPH--hemoprotein reductase). Exhibits catalytic activity for the formation of hydroxyestrogens from 17beta-estradiol (E2), namely 2- and 4-hydroxy E2. Metabolizes testosterone and progesterone to B or D ring hydroxylated metabolites. May act as a major enzyme for all-trans retinoic acid biosynthesis in extrahepatic tissues. Catalyzes two successive oxidative transformation of all-trans retinol to all-trans retinal and then to the active form all-trans retinoic acid. Catalyzes the epoxidation of double bonds of certain PUFA. Converts arachidonic acid toward epoxyeicosatrienoic acid (EpETrE) regioisomers, 8,9-, 11,12-, and 14,15- EpETrE, that function as lipid mediators in the vascular system. Additionally, displays dehydratase activity toward oxygenated eicosanoids hydroperoxyeicosatetraenoates (HpETEs). This activity is independent of cytochrome P450 reductase, NADPH, and O2. Also involved in the oxidative metabolism of xenobiotics, particularly converting polycyclic aromatic hydrocarbons and heterocyclic aryl amines procarcinogens to DNA-damaging products. Plays an important role in retinal vascular development. Under ambient/hyperoxic O2 conditions, promotes angiogenesis and capillary morphogenesis of retinal endothelial cells and pericytes, likely by metabolizing the oxygenated products symptomatic of oxidative stress. Also, contributes to oxidative homeostasis and ultrastructural organization and function of trabecular meshwork tissue through modulation of POSTN expression. In Mus musculus (Mouse), this protein is Cytochrome P450 1B1.